A 435-amino-acid chain; its full sequence is 5-methylthioadenosine/S-adenosylhomocysteine deaminase (435 aa).

Residues H65 and H67 each coordinate Zn(2+). Substrate-binding residues include E94, R150, and H189. H216 serves as a coordination point for Zn(2+). Positions 219 and 304 each coordinate substrate. D304 provides a ligand contact to Zn(2+).

The protein belongs to the metallo-dependent hydrolases superfamily. MTA/SAH deaminase family. Zn(2+) serves as cofactor.

It catalyses the reaction S-adenosyl-L-homocysteine + H2O + H(+) = S-inosyl-L-homocysteine + NH4(+). It carries out the reaction S-methyl-5'-thioadenosine + H2O + H(+) = S-methyl-5'-thioinosine + NH4(+). Catalyzes the deamination of 5-methylthioadenosine and S-adenosyl-L-homocysteine into 5-methylthioinosine and S-inosyl-L-homocysteine, respectively. Is also able to deaminate adenosine. The chain is 5-methylthioadenosine/S-adenosylhomocysteine deaminase from Bacillus cereus (strain ATCC 14579 / DSM 31 / CCUG 7414 / JCM 2152 / NBRC 15305 / NCIMB 9373 / NCTC 2599 / NRRL B-3711).